Reading from the N-terminus, the 381-residue chain is tRNA pseudouridine synthase D (381 aa).

D81 functions as the Nucleophile in the catalytic mechanism. The TRUD domain occupies 160–335 (GMPNYFGSQR…TLGSRRFFWV (176 aa)).

The protein belongs to the pseudouridine synthase TruD family.

It carries out the reaction uridine(13) in tRNA = pseudouridine(13) in tRNA. In terms of biological role, responsible for synthesis of pseudouridine from uracil-13 in transfer RNAs. The sequence is that of tRNA pseudouridine synthase D from Helicobacter pylori (strain ATCC 700392 / 26695) (Campylobacter pylori).